The following is an 894-amino-acid chain: Sorting nexin-14 (894 aa).

Positions 78-252 (SSKVDASLSE…LLIIFIDDSP (175 aa)) constitute a PXA domain. An RGS domain is found at 284–416 (ELKQIREQQD…CHSDEYFRQL (133 aa)). Phosphoserine is present on Ser496. The region spanning 518–638 (PYVDFFEDPS…DFLSPNGGET (121 aa)) is the PX domain.

This sequence belongs to the sorting nexin family.

Its subcellular location is the cytoplasm. The protein localises to the cell projection. It localises to the dendrite. In terms of biological role, plays a role in maintaining normal neuronal excitability and synaptic transmission. May be involved in several stages of intracellular trafficking. This Pongo abelii (Sumatran orangutan) protein is Sorting nexin-14 (SNX14).